The following is a 481-amino-acid chain: MSVSTETKSSGRITQIIGPVLDVSFPAGKMPNIYNALTVGGKNEAGQEISVTCEVQQLLGDHCVRAVAMSATDGLMRGMEVLDSGKPLNVPVGAATLGRIFNVLGEPVDNLGPVNTKDQLPIHRSAPAFVDLDTKLSIFESGIKVVDLLAPYRRGGKIGLFGGAGVGKTVLIMELINNIAKAHGGVSVFGGVGERTREGNDLYMEMKESGVINESNISESKVALVYGQMNEPPGARMRVGLTALTMAEFFRDINKQDVLLFIDNIFRFVQAGSEVSALLGRMPSAVGYQPTLATEMGGLQERITSTKDGSITSIQAVYVPADDLTDPAPATTFAHLDATTVLSRNLASKGIYPAVDPLDSTSTMLQPWIVGDQHYQCAQNVKQTLQRYKELQDIIAILGLDELSEEDRLIVARARKIERFLSQPFFVAEVFTGSPGKYVSLAETIQGFNLILSGELDDLPEQAFYLVGNLDEAVSKAATLS.

ATP is bound at residue glycine 162–threonine 169.

Belongs to the ATPase alpha/beta chains family. As to quaternary structure, F-type ATPases have 2 components, CF(1) - the catalytic core - and CF(0) - the membrane proton channel. CF(1) has five subunits: alpha(3), beta(3), gamma(1), delta(1), epsilon(1). CF(0) has four main subunits: a(1), b(1), b'(1) and c(9-12).

It is found in the plastid. The protein resides in the chloroplast thylakoid membrane. It catalyses the reaction ATP + H2O + 4 H(+)(in) = ADP + phosphate + 5 H(+)(out). In terms of biological role, produces ATP from ADP in the presence of a proton gradient across the membrane. The catalytic sites are hosted primarily by the beta subunits. This Chlorella vulgaris (Green alga) protein is ATP synthase subunit beta, chloroplastic.